Consider the following 233-residue polypeptide: MARKVVVVDDEKPIADILEFNLKKEGYEVFCAYDGNDAVDLIYDEEPDIVLLDIMLPGRDGMEVCREVRKKYEMPIIMLTAKDSEIDKVLGLELGADDYVTKPFSTRELIARVKANLRRHYSQPAQEVNDASNEITIKDIVIYPDAYSIKKRGDDIELTHREFELFHYLSKHMGQVMTREHLLQTVWGYDYFGDVRTVDVTIRRLREKIEDDPSHPEYIVTRRGVGYFLQQHE.

A Response regulatory domain is found at 4–117 (KVVVVDDEKP…ELIARVKANL (114 aa)). Aspartate 53 carries the 4-aspartylphosphate modification. The segment at residues 132 to 231 (SNEITIKDIV…RRGVGYFLQQ (100 aa)) is a DNA-binding region (ompR/PhoB-type).

In terms of processing, phosphorylated by WalK.

Its subcellular location is the cytoplasm. Member of the two-component regulatory system WalK/WalR. This Staphylococcus saprophyticus subsp. saprophyticus (strain ATCC 15305 / DSM 20229 / NCIMB 8711 / NCTC 7292 / S-41) protein is Transcriptional regulatory protein WalR (walR).